We begin with the raw amino-acid sequence, 452 residues long: MASSTHVPIAAIATAPGRGGIGVVRISGPDLSALARRLFGRELTPRHAHYLPFTAETGEHLDEGIALYFRAPQSYTGEDVLELQGHGGPAVLRRILERCLQAGADLGVRLAEPGEFTRRAFLNDRMDLAQAEAVADLIDASSVAAARGAMASLSGEFSARVNALSDRIVHLRMLVEATLDFPEEEIDFLEKYQARPTLQALAADLATLIAQARQGVILREGLHVVLAGKPNVGKSSLLNALAGDDIAIVTPIAGTTRDKVVQEIHIDGVPLHIVDTAGLRDTDDTVESIGIARTWKEIERADVILHLQDATQPADELDAQIVARLPARTPLLTVFNKVDLLDQPFQAQAGQLGISAREGAGLDELRARLLALAGWNPGAESPWLARERHVHALQRAAEHLEAATEHAAQDDRVLDLFAEELRLAHDSLSSITGKFTSDDLLGEIFSSFCIGK.

(6S)-5-formyl-5,6,7,8-tetrahydrofolate is bound by residues arginine 25, glutamate 82, and arginine 125. A TrmE-type G domain is found at 221–374 (GLHVVLAGKP…LRARLLALAG (154 aa)). Asparagine 231 provides a ligand contact to K(+). Residues 231–236 (NVGKSS), 250–256 (TPIAGTT), 275–278 (DTAG), and 355–357 (SAR) each bind GTP. Serine 235 provides a ligand contact to Mg(2+). 3 residues coordinate K(+): threonine 250, isoleucine 252, and threonine 255. Threonine 256 serves as a coordination point for Mg(2+). Lysine 452 lines the (6S)-5-formyl-5,6,7,8-tetrahydrofolate pocket.

This sequence belongs to the TRAFAC class TrmE-Era-EngA-EngB-Septin-like GTPase superfamily. TrmE GTPase family. In terms of assembly, homodimer. Heterotetramer of two MnmE and two MnmG subunits. K(+) serves as cofactor.

The protein resides in the cytoplasm. In terms of biological role, exhibits a very high intrinsic GTPase hydrolysis rate. Involved in the addition of a carboxymethylaminomethyl (cmnm) group at the wobble position (U34) of certain tRNAs, forming tRNA-cmnm(5)s(2)U34. This chain is tRNA modification GTPase MnmE, found in Bordetella petrii (strain ATCC BAA-461 / DSM 12804 / CCUG 43448).